The primary structure comprises 193 residues: Peptidyl-tRNA hydrolase (193 aa).

Residue Y16 coordinates tRNA. The active-site Proton acceptor is H21. The tRNA site is built by F67, N69, and N115.

The protein belongs to the PTH family. In terms of assembly, monomer.

The protein resides in the cytoplasm. The enzyme catalyses an N-acyl-L-alpha-aminoacyl-tRNA + H2O = an N-acyl-L-amino acid + a tRNA + H(+). In terms of biological role, hydrolyzes ribosome-free peptidyl-tRNAs (with 1 or more amino acids incorporated), which drop off the ribosome during protein synthesis, or as a result of ribosome stalling. Catalyzes the release of premature peptidyl moieties from peptidyl-tRNA molecules trapped in stalled 50S ribosomal subunits, and thus maintains levels of free tRNAs and 50S ribosomes. This chain is Peptidyl-tRNA hydrolase, found in Baumannia cicadellinicola subsp. Homalodisca coagulata.